The sequence spans 101 residues: DNA-directed RNA polymerase subunit omega (101 aa).

Residues 1–13 are compositionally biased toward low complexity; the sequence is MSSTPAAASATPS. Residues 1-22 are disordered; it reads MSSTPAAASATPSHGALPAYDT.

The protein belongs to the RNA polymerase subunit omega family. As to quaternary structure, the RNAP catalytic core consists of 2 alpha, 1 beta, 1 beta' and 1 omega subunit. When a sigma factor is associated with the core the holoenzyme is formed, which can initiate transcription.

It carries out the reaction RNA(n) + a ribonucleoside 5'-triphosphate = RNA(n+1) + diphosphate. Functionally, promotes RNA polymerase assembly. Latches the N- and C-terminal regions of the beta' subunit thereby facilitating its interaction with the beta and alpha subunits. The protein is DNA-directed RNA polymerase subunit omega of Rhodococcus jostii (strain RHA1).